Reading from the N-terminus, the 452-residue chain is GTPase Der (452 aa).

EngA-type G domains lie at 9–170 and 185–362; these read KIIA…PEED and LQIV…KTWN. Residues 15 to 22, 62 to 66, 124 to 127, 191 to 198, 238 to 242, and 303 to 306 each bind GTP; these read GRPNVGKS, DTPGL, NKCE, GRPNAGKS, DTAGL, and NKWD. Positions 363–448 constitute a KH-like domain; the sequence is KKITTSKLNE…PIRFNYIKTK (86 aa).

It belongs to the TRAFAC class TrmE-Era-EngA-EngB-Septin-like GTPase superfamily. EngA (Der) GTPase family. As to quaternary structure, associates with the 50S ribosomal subunit.

Functionally, GTPase that plays an essential role in the late steps of ribosome biogenesis. The polypeptide is GTPase Der (Rickettsia bellii (strain RML369-C)).